Reading from the N-terminus, the 390-residue chain is Transcription factor bHLH76 (390 aa).

A disordered region spans residues 147–217 (NVSEDSQSSG…SEKQPSDSLK (71 aa)). Positions 207 to 217 (NSEKQPSDSLK) are enriched in basic and acidic residues. In terms of domain architecture, bHLH spans 229 to 279 (QATNSHSLAERVRREKISERMKFLQDLVPGCDKVTGKAVMLDEIINYVQSL).

In terms of assembly, homodimer. Interacts with IBH1. Binds reversibly to CRY2 after blue light illumination. As to expression, expressed constitutively in roots, leaves, stems, and flowers.

It is found in the nucleus. Its function is as follows. Transcriptional activator involved in cell elongation. Regulates the expression of a subset of genes involved in cell expansion by binding to the G-box motif. Binds to chromatin DNA of the FT gene and promotes its expression, and thus triggers flowering in response to blue light. This chain is Transcription factor bHLH76 (BHLH76), found in Arabidopsis thaliana (Mouse-ear cress).